A 339-amino-acid chain; its full sequence is D-erythrose-4-phosphate dehydrogenase (339 aa).

11–12 serves as a coordination point for NAD(+); it reads RI. Substrate-binding positions include 158–160, arginine 204, 217–218, and arginine 240; these read SCT and TK. Cysteine 159 functions as the Nucleophile in the catalytic mechanism. Residue asparagine 322 coordinates NAD(+).

This sequence belongs to the glyceraldehyde-3-phosphate dehydrogenase family. Epd subfamily. Homotetramer.

Its subcellular location is the cytoplasm. The enzyme catalyses D-erythrose 4-phosphate + NAD(+) + H2O = 4-phospho-D-erythronate + NADH + 2 H(+). It participates in cofactor biosynthesis; pyridoxine 5'-phosphate biosynthesis; pyridoxine 5'-phosphate from D-erythrose 4-phosphate: step 1/5. Its function is as follows. Catalyzes the NAD-dependent conversion of D-erythrose 4-phosphate to 4-phosphoerythronate. The sequence is that of D-erythrose-4-phosphate dehydrogenase from Aliivibrio fischeri (strain ATCC 700601 / ES114) (Vibrio fischeri).